The primary structure comprises 73 residues: Protein SlyX homolog (73 aa).

This sequence belongs to the SlyX family.

The chain is Protein SlyX homolog from Actinobacillus pleuropneumoniae serotype 5b (strain L20).